Reading from the N-terminus, the 410-residue chain is MSYNSIRLPQDLPIYYKNFFPVKPFTKWLRYGQNNGDYFNRREFAFILADDVHIRYRSYNDEHAFFKALSSTNPEKLDIGAVYNHEPINNKRHTDYQAVERELVFDIDLTDYDPVRNCCKDATVCPKCWKFMVLAVKILDFQLEDMFDFKARMWVFSGRRGVHCWVGDKKARMLNNYQRSAIATRLNLFKKNGQCEVTEGRAKMTKVPPIVRDAFNVALKDGVFEKMIYDQGWLDKEDFITEYKFMSEVGRDDLRSLSETYKTPQERWNMIRGLFDDDYRKSLSPKDGLLDFKMQGRDRNYLLYFVLQRCYPRLDVNVSTGTNHLLKSPFCIHPKTGNVAVPLNVGKIEEFDVSKCPRIDHVVEELSSLLAERGNDENEDSKNRKFLAYKHGALAPYVENFEKFVSACIS.

Catalysis depends on residues E43, D106, and D108. Positions 118–129 match the Zinc knuckle motif motif; the sequence is CCKDATVCPKCW.

This sequence belongs to the eukaryotic-type primase small subunit family. In terms of assembly, heterodimer of a small subunit and a large subunit.

Functionally, DNA primase is the polymerase that synthesizes small RNA primers for the Okazaki fragments made during discontinuous DNA replication. The protein is DNA primase small subunit (pri-1) of Caenorhabditis elegans.